A 129-amino-acid polypeptide reads, in one-letter code: Large ribosomal subunit protein uL22 (129 aa).

This sequence belongs to the universal ribosomal protein uL22 family. In terms of assembly, part of the 50S ribosomal subunit.

In terms of biological role, this protein binds specifically to 23S rRNA; its binding is stimulated by other ribosomal proteins, e.g. L4, L17, and L20. It is important during the early stages of 50S assembly. It makes multiple contacts with different domains of the 23S rRNA in the assembled 50S subunit and ribosome. Functionally, the globular domain of the protein is located near the polypeptide exit tunnel on the outside of the subunit, while an extended beta-hairpin is found that lines the wall of the exit tunnel in the center of the 70S ribosome. This Phytoplasma sp. (strain STRAWB2) protein is Large ribosomal subunit protein uL22.